Consider the following 477-residue polypeptide: Delayed-rectifier potassium channel regulatory subunit KCNS2 (477 aa).

At 1–184 (MTRQSLWDVS…LALDNPGYSV (184 aa)) the chain is on the cytoplasmic side. A helical transmembrane segment spans residues 185–206 (LSRVFSVLSILVVLGSIITMCL). At 207–225 (NSLPDFQIPDSQGNPGEDP) the chain is on the extracellular side. A helical transmembrane segment spans residues 226-248 (RFEIVEHFGIAWFTFELVARFAV). Residues 249-259 (APDFLKFFKNA) are Cytoplasmic-facing. A helical transmembrane segment spans residues 260-280 (LNLIDLMSIVPFYITLVVNLV). The Extracellular segment spans residues 281-290 (VESSPTLANL). The chain crosses the membrane as a helical; Voltage-sensor span at residues 291–311 (GRVAQVLRLMRIFRILKLARH). The Cytoplasmic portion of the chain corresponds to 312-326 (STGLRSLGATLKYSY). The chain crosses the membrane as a helical span at residues 327 to 348 (KEVGLLLLYLSVGISIFSVVAY). Over 349-361 (TIEKEENEGLATI) the chain is Extracellular. The helical intramembrane region spans 362–373 (PACWWWATVSMT). The short motif at 374 to 379 (TVGYGD) is the Selectivity filter element. An intramembrane segment occupies 374–381 (TVGYGDVV). Residues 382-388 (PGTTAGK) are Extracellular-facing. A helical membrane pass occupies residues 389 to 417 (LTASACILAGILVVVLPITLIFNKFSHFY). Topologically, residues 418 to 477 (RRQKQLESAMRSCDFGDGMKEVPSVNLRDYYAHKVKSLMASLTNMSRSSPSELSLDDSLH) are cytoplasmic.

It belongs to the potassium channel family. S (TC 1.A.1.2) subfamily. Kv9.2/KCNS2 sub-subfamily. In terms of assembly, heterotetramer with KCNB1 and KCNB2. Does not form homomultimers. In terms of tissue distribution, detected in brain, but not in the other tissues tested. Expression was highest in the olfactory bulb, cerebral cortex, hippocampus, habenula, basolateral amygdaloid nuclei and cerebellum.

The protein resides in the cell membrane. Potassium channel regulatory subunit that modulate the delayed rectifier voltage-gated potassium channel activity of KCNB1 and KCNB2 by altering their kinetics, expression levels, and shifting the half-inactivation potential to more polarized values. While it does not form functional channels on its own, it can form functional heterotetrameric channels with KCNB1 and KCNB2. Each regulatory subunit has unique regulatory properties that can lead to extensive inhibition, significant changes in kinetics, and/or substantial shifts in the voltage dependencies of the inactivation process. The chain is Delayed-rectifier potassium channel regulatory subunit KCNS2 from Mus musculus (Mouse).